The chain runs to 846 residues: Spindle pole body component SPC98 (846 aa).

Phosphoserine occurs at positions 124 and 136.

Belongs to the TUBGCP family. As to quaternary structure, interacts with TUB4, SPC72 and SPC97.

It is found in the nucleus. Its subcellular location is the cytoplasm. The protein resides in the cytoskeleton. It localises to the microtubule organizing center. The protein localises to the spindle pole body. In terms of biological role, involved in microtubule organization by the microtubule organizing center, the spindle pole body (SPB). Probably part of the microtubule attachment site at the SPB. The protein is Spindle pole body component SPC98 (SPC98) of Saccharomyces cerevisiae (strain ATCC 204508 / S288c) (Baker's yeast).